The primary structure comprises 289 residues: Diaminopimelate epimerase (289 aa).

Substrate contacts are provided by N13, Q47, and N67. The active-site Proton donor is C76. Residues 77–78 (GN), N167, N200, and 218–219 (ER) contribute to the substrate site. C227 (proton acceptor) is an active-site residue. 228–229 (GT) is a binding site for substrate.

Belongs to the diaminopimelate epimerase family. As to quaternary structure, homodimer.

It localises to the cytoplasm. The catalysed reaction is (2S,6S)-2,6-diaminopimelate = meso-2,6-diaminopimelate. Its pathway is amino-acid biosynthesis; L-lysine biosynthesis via DAP pathway; DL-2,6-diaminopimelate from LL-2,6-diaminopimelate: step 1/1. Catalyzes the stereoinversion of LL-2,6-diaminopimelate (L,L-DAP) to meso-diaminopimelate (meso-DAP), a precursor of L-lysine and an essential component of the bacterial peptidoglycan. The protein is Diaminopimelate epimerase of Burkholderia pseudomallei (strain 668).